Here is a 292-residue protein sequence, read N- to C-terminus: uncharacterized protein (292 aa).

The HTH lysR-type domain occupies 1–59; that stretch reads MTITQLKVFVKIAETGSFTKAGQALNMTQPAVSHAISAIEAELDVKLIIRDRRNGLMLT. The H-T-H motif DNA-binding region spans 18-37; that stretch reads FTKAGQALNMTQPAVSHAIS.

This sequence belongs to the LysR transcriptional regulatory family.

This is an uncharacterized protein from Bacillus subtilis (strain 168).